Reading from the N-terminus, the 346-residue chain is Very-long-chain 3-oxoacyl-CoA reductase (346 aa).

The chain crosses the membrane as a helical span at residues 26–46 (GASALLAAGSLFVVSRALVFV). The NADP(+) site is built by Val71, Asp126, Asp134, Asn153, Tyr220, Lys224, Ile253, and Ser255. The Proton donor role is filled by Tyr220. The active-site Lowers pKa of active site Tyr is Lys224.

It belongs to the short-chain dehydrogenases/reductases (SDR) family.

It is found in the endoplasmic reticulum membrane. It carries out the reaction a very-long-chain (3R)-3-hydroxyacyl-CoA + NADP(+) = a very-long-chain 3-oxoacyl-CoA + NADPH + H(+). It functions in the pathway lipid metabolism; fatty acid biosynthesis. Component of the microsomal membrane bound fatty acid elongation system, which produces the 26-carbon very long-chain fatty acids (VLCFA) from palmitate. Catalyzes the reduction of the 3-ketoacyl-CoA intermediate that is formed in each cycle of fatty acid elongation. VLCFAs serve as precursors for ceramide and sphingolipids. The chain is Very-long-chain 3-oxoacyl-CoA reductase from Aspergillus niger (strain ATCC MYA-4892 / CBS 513.88 / FGSC A1513).